A 351-amino-acid chain; its full sequence is Phosphoribosylformylglycinamidine cyclo-ligase (351 aa).

It belongs to the AIR synthase family.

It localises to the cytoplasm. The enzyme catalyses 2-formamido-N(1)-(5-O-phospho-beta-D-ribosyl)acetamidine + ATP = 5-amino-1-(5-phospho-beta-D-ribosyl)imidazole + ADP + phosphate + H(+). It functions in the pathway purine metabolism; IMP biosynthesis via de novo pathway; 5-amino-1-(5-phospho-D-ribosyl)imidazole from N(2)-formyl-N(1)-(5-phospho-D-ribosyl)glycinamide: step 2/2. This chain is Phosphoribosylformylglycinamidine cyclo-ligase, found in Burkholderia multivorans (strain ATCC 17616 / 249).